The sequence spans 184 residues: dCTP deaminase (184 aa).

107–112 contacts dCTP; sequence KSTYAR. Glu-133 functions as the Proton donor/acceptor in the catalytic mechanism. Residues Gln-152, Tyr-166, and Gln-176 each contribute to the dCTP site.

Belongs to the dCTP deaminase family. Homotrimer.

The catalysed reaction is dCTP + H2O + H(+) = dUTP + NH4(+). It participates in pyrimidine metabolism; dUMP biosynthesis; dUMP from dCTP (dUTP route): step 1/2. Its function is as follows. Catalyzes the deamination of dCTP to dUTP. The polypeptide is dCTP deaminase (Acidiphilium cryptum (strain JF-5)).